The chain runs to 396 residues: Putative arsenical pump-driving ATPase 1 (396 aa).

ATP is bound at residue 8 to 15 (GKGGVGKT).

The protein belongs to the arsA ATPase family.

The catalysed reaction is arsenite(in) + ATP + H2O = arsenite(out) + ADP + phosphate + H(+). In terms of biological role, anion-transporting ATPase. Catalyzes the extrusion of arsenite. This chain is Putative arsenical pump-driving ATPase 1 (arsA1), found in Aquifex aeolicus (strain VF5).